Here is a 450-residue protein sequence, read N- to C-terminus: Class E vacuolar protein-sorting machinery protein HSE1 (450 aa).

The VHS domain maps to 15–145 (ATDGKLRSDN…RIRRKWPGLL (131 aa)). 3 disordered regions span residues 141–167 (WPGL…EDQE), 179–212 (FEKS…QTTS), and 374–450 (PNTQ…PPNY). A compositionally biased stretch (basic and acidic residues) spans 147–167 (EPEKPSKQKVSHQEATDEDQE). The region spanning 163-182 (DEDQELQRALKMSLEEFEKS) is the UIM domain. Over residues 184 to 196 (QQSNGSAVQSNSL) the composition is skewed to polar residues. Over residues 197–209 (QDHNQGQQQPQQQ) the composition is skewed to low complexity. The SH3 domain maps to 212 to 271 (SGIRRVRALYDLNANEQDELSFRKGDVIVVLEQVYRDWWRGSLHGKIGIFPLNYVTPITE). Low complexity predominate over residues 394 to 432 (NNTYQTTNGQYTQHNITPQQQYQVPSQNYQSQPPSMQSN).

This sequence belongs to the STAM family. In terms of assembly, component of the ESCRT-0 complex composed of HSE1 and VPS27.

The protein resides in the endosome membrane. Functionally, component of the ESCRT-0 complex which is the sorting receptor for ubiquitinated cargo proteins at the multivesicular body (MVB). This is Class E vacuolar protein-sorting machinery protein HSE1 (HSE1) from Candida glabrata (strain ATCC 2001 / BCRC 20586 / JCM 3761 / NBRC 0622 / NRRL Y-65 / CBS 138) (Yeast).